Consider the following 156-residue polypeptide: Ribosomal RNA large subunit methyltransferase H (156 aa).

S-adenosyl-L-methionine is bound by residues L73, G104, and 123–128 (ISSMTL).

It belongs to the RNA methyltransferase RlmH family. Homodimer.

Its subcellular location is the cytoplasm. The enzyme catalyses pseudouridine(1915) in 23S rRNA + S-adenosyl-L-methionine = N(3)-methylpseudouridine(1915) in 23S rRNA + S-adenosyl-L-homocysteine + H(+). Functionally, specifically methylates the pseudouridine at position 1915 (m3Psi1915) in 23S rRNA. The sequence is that of Ribosomal RNA large subunit methyltransferase H from Burkholderia lata (strain ATCC 17760 / DSM 23089 / LMG 22485 / NCIMB 9086 / R18194 / 383).